A 192-amino-acid polypeptide reads, in one-letter code: Orotate phosphoribosyltransferase (192 aa).

116 to 124 (EDIVTTGLS) provides a ligand contact to 5-phospho-alpha-D-ribose 1-diphosphate. 2 residues coordinate orotate: Thr-120 and Arg-148.

It belongs to the purine/pyrimidine phosphoribosyltransferase family. PyrE subfamily. In terms of assembly, homodimer. It depends on Mg(2+) as a cofactor.

It catalyses the reaction orotidine 5'-phosphate + diphosphate = orotate + 5-phospho-alpha-D-ribose 1-diphosphate. The protein operates within pyrimidine metabolism; UMP biosynthesis via de novo pathway; UMP from orotate: step 1/2. Catalyzes the transfer of a ribosyl phosphate group from 5-phosphoribose 1-diphosphate to orotate, leading to the formation of orotidine monophosphate (OMP). The polypeptide is Orotate phosphoribosyltransferase (Brucella anthropi (strain ATCC 49188 / DSM 6882 / CCUG 24695 / JCM 21032 / LMG 3331 / NBRC 15819 / NCTC 12168 / Alc 37) (Ochrobactrum anthropi)).